The sequence spans 1506 residues: Transcriptional repressor NF-X1 homolog (1506 aa).

Positions 1-12 (MEESQNIPPKTQ) are enriched in polar residues. Disordered stretches follow at residues 1–123 (MEES…NNQL), 142–164 (LKSE…QEPT), and 181–282 (KAFV…KKDI). Low complexity-rich tracts occupy residues 13–103 (TLNN…SNSN) and 110–121 (HNNNYNNNNNNN). The segment covering 194-209 (NNTNNNNNNNNNNNNN) has biased composition (low complexity). Over residues 217 to 232 (DNNRPQRERRERKPKE) the composition is skewed to basic and acidic residues. Residues 240-252 (PQQPQQPQQPQPQ) are compositionally biased toward pro residues. Over residues 253–263 (PQQQQQSQQQQ) the composition is skewed to low complexity. Positions 267-282 (ENNRKKENKLQSKKDI) are enriched in basic and acidic residues. The PHD-type zinc-finger motif lies at 363-416 (IYECMVCFENVGKNAVIWSCSQCFTMFHSSCIKQWSSKSVTTEGKWKCPGCRYN). The RING-type; degenerate zinc finger occupies 366-414 (CMVCFENVGKNAVIWSCSQCFTMFHSSCIKQWSSKSVTTEGKWKCPGCR). NF-X1-type zinc fingers lie at residues 460–478 (CPHS…NCSS), 515–534 (CGNH…PCEV), 581–600 (CGNH…PCSL), 642–661 (CKQH…SCKV), 739–758 (CGVH…NCYI), 796–817 (CGHS…PCTY), and 852–868 (CLSH…PCLI). Disordered stretches follow at residues 897–1012 (QQSK…VDLN) and 1021–1040 (NEEE…DEDE). Low complexity predominate over residues 903–921 (TTTTTTTTTTSTTSTTSPK). Acidic residues predominate over residues 925–934 (KDEELIEDDN). Over residues 935–980 (NNNNNNNNNNNNNNNNNNNNNNNNNNNNNNNNNNNNNNNNNNNNNN) the composition is skewed to low complexity. Composition is skewed to basic and acidic residues over residues 981 to 1002 (EKAE…HSDD) and 1021 to 1031 (NEEEERIKKEE). An NF-X1-type 8 zinc finger spans residues 1062-1084 (CEHTCHQACHPGEPCPTNISCKQ). Disordered regions lie at residues 1132–1167 (SHTL…SSPT) and 1447–1473 (NQNQ…IKPT). 2 stretches are compositionally biased toward low complexity: residues 1137-1167 (NNPN…SSPT) and 1447-1470 (NQNQ…NINI).

Belongs to the NFX1 family.

It is found in the nucleus. May play a role in transcription regulation. This is Transcriptional repressor NF-X1 homolog (nfx1) from Dictyostelium discoideum (Social amoeba).